We begin with the raw amino-acid sequence, 357 residues long: Cinnamyl alcohol dehydrogenase 5 (357 aa).

Cys47 contributes to the Zn(2+) binding site. Residue Thr49 participates in NADP(+) binding. The Zn(2+) site is built by His69, Glu70, Cys100, Cys103, Cys106, Cys114, and Cys163. Residues Thr167, 188–193 (GLGGVG), 211–216 (SSSNKK), Thr251, Gly275, and 298–300 (SFI) contribute to the NADP(+) site.

It belongs to the zinc-containing alcohol dehydrogenase family. In terms of assembly, homodimer. Zn(2+) is required as a cofactor. As to expression, expressed at the lateral root initiation sites, in the vascular tissues of the primary lateral root and the root caps. Expressed in the hypocotyl, cotyledon and leaf veins, apical meristem region, at the base of the trichomes, hydathodes and cauline leaves. In stems, expressed in the cells associated with the vascular cambium, interfascicular cambium and the developing xylem. Expressed in the vascular strand of petals and sepals, anthers, stamen filaments, stigma in flowers, and abscission, style and stigmatic regions of siliques.

The catalysed reaction is (E)-cinnamyl alcohol + NADP(+) = (E)-cinnamaldehyde + NADPH + H(+). It carries out the reaction (E)-coniferol + NADP(+) = (E)-coniferaldehyde + NADPH + H(+). It catalyses the reaction (E)-sinapyl alcohol + NADP(+) = (E)-sinapaldehyde + NADPH + H(+). The enzyme catalyses (E)-4-coumaroyl alcohol + NADP(+) = (E)-4-coumaraldehyde + NADPH + H(+). The catalysed reaction is (E)-caffeyl alcohol + NADP(+) = (E)-caffeyl aldehyde + NADPH + H(+). Its pathway is aromatic compound metabolism; phenylpropanoid biosynthesis. Functionally, involved in lignin biosynthesis in the floral stem. Catalyzes the final step specific for the production of lignin monomers. Catalyzes the NADPH-dependent reduction of coniferaldehyde, 5-hydroxyconiferaldehyde, sinapaldehyde, 4-coumaraldehyde and caffeyl aldehyde to their respective alcohols. This Arabidopsis thaliana (Mouse-ear cress) protein is Cinnamyl alcohol dehydrogenase 5.